Consider the following 380-residue polypeptide: tRNA pseudouridine synthase B (380 aa).

D63 serves as the catalytic Nucleophile. A disordered region spans residues 309-339 (QNVEDDNDDNDDNDDNDDNDDNDDNDDNDDN). A compositionally biased stretch (acidic residues) spans 311 to 338 (VEDDNDDNDDNDDNDDNDDNDDNDDNDD).

The protein belongs to the pseudouridine synthase TruB family. Type 1 subfamily.

The catalysed reaction is uridine(55) in tRNA = pseudouridine(55) in tRNA. Functionally, responsible for synthesis of pseudouridine from uracil-55 in the psi GC loop of transfer RNAs. The sequence is that of tRNA pseudouridine synthase B from Psychrobacter arcticus (strain DSM 17307 / VKM B-2377 / 273-4).